A 240-amino-acid polypeptide reads, in one-letter code: Interleukin-1 receptor-associated kinase 1-binding protein 1 homolog (240 aa).

It belongs to the IRAK1BP1 family.

Its subcellular location is the cytoplasm. It localises to the nucleus. Functionally, may be part of a signaling pathway that leads to NF-kappa-B activation. The chain is Interleukin-1 receptor-associated kinase 1-binding protein 1 homolog (irak1bp1) from Oncorhynchus mykiss (Rainbow trout).